Here is a 314-residue protein sequence, read N- to C-terminus: Lipoyl synthase (314 aa).

[4Fe-4S] cluster contacts are provided by C67, C72, C78, C93, C97, C100, and S306. A Radical SAM core domain is found at 79–295 (FNRGTATFMI…KNYALSIGFK (217 aa)).

Belongs to the radical SAM superfamily. Lipoyl synthase family. Requires [4Fe-4S] cluster as cofactor.

The protein resides in the cytoplasm. The catalysed reaction is [[Fe-S] cluster scaffold protein carrying a second [4Fe-4S](2+) cluster] + N(6)-octanoyl-L-lysyl-[protein] + 2 oxidized [2Fe-2S]-[ferredoxin] + 2 S-adenosyl-L-methionine + 4 H(+) = [[Fe-S] cluster scaffold protein] + N(6)-[(R)-dihydrolipoyl]-L-lysyl-[protein] + 4 Fe(3+) + 2 hydrogen sulfide + 2 5'-deoxyadenosine + 2 L-methionine + 2 reduced [2Fe-2S]-[ferredoxin]. The protein operates within protein modification; protein lipoylation via endogenous pathway; protein N(6)-(lipoyl)lysine from octanoyl-[acyl-carrier-protein]: step 2/2. Functionally, catalyzes the radical-mediated insertion of two sulfur atoms into the C-6 and C-8 positions of the octanoyl moiety bound to the lipoyl domains of lipoate-dependent enzymes, thereby converting the octanoylated domains into lipoylated derivatives. In Buchnera aphidicola subsp. Baizongia pistaciae (strain Bp), this protein is Lipoyl synthase.